The primary structure comprises 284 residues: NAD kinase (284 aa).

Asp-60 functions as the Proton acceptor in the catalytic mechanism. NAD(+)-binding positions include Asp-60–Gly-61, Asn-134–Asp-135, Lys-145, Arg-162, Asp-164, and Gln-235.

This sequence belongs to the NAD kinase family. A divalent metal cation is required as a cofactor.

The protein localises to the cytoplasm. It catalyses the reaction NAD(+) + ATP = ADP + NADP(+) + H(+). In terms of biological role, involved in the regulation of the intracellular balance of NAD and NADP, and is a key enzyme in the biosynthesis of NADP. Catalyzes specifically the phosphorylation on 2'-hydroxyl of the adenosine moiety of NAD to yield NADP. In Treponema denticola (strain ATCC 35405 / DSM 14222 / CIP 103919 / JCM 8153 / KCTC 15104), this protein is NAD kinase.